Reading from the N-terminus, the 1136-residue chain is Myosin-binding protein C, fast-type (1136 aa).

2 disordered regions span residues 1-55 and 151-177; these read MPEA…KKPD and APRQ…DAGE. Basic and acidic residues predominate over residues 13–35; it reads KGKDAPKEAPAKQTPEEPPKEAP. Residues 46–149 form the Ig-like C2-type 1 domain; sequence PTGIFLKKPD…CDSCSFNVDV (104 aa). Over residues 163–174 the composition is skewed to basic and acidic residues; it reads SFKRSGDGKSED. Ig-like C2-type domains follow at residues 250 to 339, 340 to 432, 433 to 533, and 534 to 633; these read SAAF…VKEP, PVLI…VEEK, QLEV…KQEP, and PKIH…VVDV. Fibronectin type-III domains lie at 636–732 and 734–829; these read PPEA…IAPT and APQH…IREI. The region spanning 833 to 927 is the Ig-like C2-type 6 domain; that stretch reads PKIRLPRHLR…ATIRIRVVEK (95 aa). One can recognise a Fibronectin type-III 3 domain in the interval 930–1025; the sequence is PAENVMVKEV…SKNTARILKT (96 aa). In terms of domain architecture, Ig-like C2-type 7 spans 1043–1136; sequence PKFLTPLMDR…ECKLDVRVPQ (94 aa).

This sequence belongs to the immunoglobulin superfamily. MyBP family.

In terms of biological role, thick filament-associated protein located in the crossbridge region of vertebrate striated muscle a bands. In vitro it binds MHC, F-actin and native thin filaments, and modifies the activity of actin-activated myosin ATPase. It may modulate muscle contraction or may play a more structural role. This chain is Myosin-binding protein C, fast-type (Mybpc2), found in Mus musculus (Mouse).